The following is a 321-amino-acid chain: uncharacterized protein (321 aa).

The tract at residues 157–220 (TLEQPIEEDF…EGAEEDSHEH (64 aa)) is disordered. Over residues 161–214 (PIEEDFDEQDENDQNERDEDDAEEQEEDEVEEEEEEQQEEEEGENDEELTEGAE) the composition is skewed to acidic residues. Residues 167-212 (DEQDENDQNERDEDDAEEQEEDEVEEEEEEQQEEEEGENDEELTEG) adopt a coiled-coil conformation.

This is an uncharacterized protein from Dictyostelium discoideum (Social amoeba).